Here is a 413-residue protein sequence, read N- to C-terminus: 2,3-bisphosphoglycerate-independent phosphoglycerate mutase (413 aa).

The protein belongs to the BPG-independent phosphoglycerate mutase family. A-PGAM subfamily.

The catalysed reaction is (2R)-2-phosphoglycerate = (2R)-3-phosphoglycerate. It functions in the pathway carbohydrate degradation; glycolysis; pyruvate from D-glyceraldehyde 3-phosphate: step 3/5. In terms of biological role, catalyzes the interconversion of 2-phosphoglycerate and 3-phosphoglycerate. This chain is 2,3-bisphosphoglycerate-independent phosphoglycerate mutase, found in Metallosphaera sedula (strain ATCC 51363 / DSM 5348 / JCM 9185 / NBRC 15509 / TH2).